Here is a 190-residue protein sequence, read N- to C-terminus: Imidazoleglycerol-phosphate dehydratase (190 aa).

This sequence belongs to the imidazoleglycerol-phosphate dehydratase family.

Its subcellular location is the cytoplasm. It catalyses the reaction D-erythro-1-(imidazol-4-yl)glycerol 3-phosphate = 3-(imidazol-4-yl)-2-oxopropyl phosphate + H2O. The protein operates within amino-acid biosynthesis; L-histidine biosynthesis; L-histidine from 5-phospho-alpha-D-ribose 1-diphosphate: step 6/9. This is Imidazoleglycerol-phosphate dehydratase from Wolinella succinogenes (strain ATCC 29543 / DSM 1740 / CCUG 13145 / JCM 31913 / LMG 7466 / NCTC 11488 / FDC 602W) (Vibrio succinogenes).